A 270-amino-acid chain; its full sequence is Putative phosphoenolpyruvate synthase regulatory protein (270 aa).

154 to 161 contacts ADP; the sequence is GVSRAGKT.

This sequence belongs to the pyruvate, phosphate/water dikinase regulatory protein family. PSRP subfamily.

It carries out the reaction [pyruvate, water dikinase] + ADP = [pyruvate, water dikinase]-phosphate + AMP + H(+). The catalysed reaction is [pyruvate, water dikinase]-phosphate + phosphate + H(+) = [pyruvate, water dikinase] + diphosphate. In terms of biological role, bifunctional serine/threonine kinase and phosphorylase involved in the regulation of the phosphoenolpyruvate synthase (PEPS) by catalyzing its phosphorylation/dephosphorylation. This Deinococcus geothermalis (strain DSM 11300 / CIP 105573 / AG-3a) protein is Putative phosphoenolpyruvate synthase regulatory protein.